The following is a 1849-amino-acid chain: MTKIVMLDYIPMLNNGGHRHPADIKPSMINSLLDSMSIILTSLCTFCEQLSLNEAIIVNLGINTLDQLLMSQAGRYLLLYYCIYALELYTVCYSTLSLILLYLIQLNYILLTNIVGYLQYSCSEIANLVYTYILLEGLLDVSELDALVVETLLDYLWVPCDLIIRYYRAYWYFEGVYFNLNIPYVQRSAYWLCVVIWNNIGWWTYQLMIIGWYSLSCLCIRLVPTILAIINLILTYIDLIIYLYDIYSNYSNMTWLGILYSTINSIIRYDISRIHAYQHLLTVIIPNYCLAIYNSGLILSSLLLDIYHYQIGLTILALQYLVAPLYISCSLLIYILCYIMTELLYSRSFYIDLLLRLLEIIYLDILVNSLISIIILILSVDVAYLIQLQVIILSQYINIISGYVAMPTTILITWYLYNIAVYIYYLVDYIATISTLIIWLLERILWVYGICANNIEPVVIDLPQLTLTSLDALLNQLLSEWCLLDAIMNVVTSVILLITVSCLGVLRIILFIAVYPVYCIGVLLLNTLLQVVVGLISYIIGTFMNAIILICDIYVYSIHRPFLPLIMYVYFVAAIILEPIIDIIHTIILAEHALFNTYCYIIFDILQPLHLQAFEFYRDLIWLIADLILAYIDLIRSTLVEGIISFIKWRLEQDFQLVYDICEFYLDEVKPRIIRYWNIYSRWVRFLIYCAGNNINLLVLLYVQFKGYTLPMIILFDLTRIQLYATIPVIISSYIYQGILQTMLIISYYNTLLVATLEFIQIWLTILSVSPEMLYTSTLGILLRSYYLLYEILLLEPTWVLFECLSTCVGLVELYLVTVETTVSNILIIDLILMEVLLEDIRQVATILTCILDWYILETCLDMQYADILLLMSSGLQSTVLNTIFDLLSLLGLLDETSIRFILELTVQVCTIPAALYSTIIYPYIVLVTRCLLYLPDVVQLYLTIGEYLLRETLYQLLIDWASCKLYSYNLYLLELYNIYYFWLSLLEKYWTFTYHIYNYTTLVELSPDLLISLISYIIDICILSLELLLEDIRWGSTIFVNLLDWYLLDTQLNIQYIDILLITSYSVQNTLLTVVFYILNLCGILNEISIQILFEITVQICTILATIYCTVVLPYILIILEILSYLPEIVQLYLDIGEHLLLEILWQLLIDLLYYRAYDYILIAQLLCKVTYLLYIVLEQLLLVIIDLYIYIIGDLLIIGSCHVGNHIIDILCSAENVYFLYFMIFIGYLLCGIFAFFYHGYLGTRGIFYLSEMIIMGILIFSIVTLYYNLKYHLALDIILGELALSNEVIFTNIITFDILSILGVLLVATLTAIILTFGVEYMLREAFAYNVLATLVLFSASIICFIVSYSFGLMIIFWEISGTLSLFLIDMYYARIRTTQAVTRTFALNRFGDLWMFTASIEIYSLCHNDALPTLFALLPYAQFNLSILGNLIFDFTIPTVIVFSIFSAAACKCAQFLLFVWLPDAMEAPTPASALIHSSTLVVMGIFMILRFAPILHLSVYTLYIMSILGSLTVAYGAILATQTSDLKKAVAYSTISQIGYLFTGCAFLAFRATLIYLILHAICKALLFVLVGYIVHMFGGTTSLRRMGGIYYIVPDIAIYMFILCMVLAGAPYTVGFFAKELIVTTLTNTSSPVATFIICCWIISFACTPFYLYRICVLPLFGRPRCSRRVFRNIVSPQSTYNFIDSDSSLNSLLHKFTNLITRWSVQGRFTNLLHLLLLLIVLFCGEFLVFLVTGLFGTSTTLFSDTAIDDSVYQLTDYYLLSYYRVRNIQLLIIVLFALVTLYITAINNQLTFNIIYLSVVLPILAIIFICLGHYFLVDFTVYIYNISNSLIFELLCDLAIC.

Transmembrane regions (helical) follow at residues 76–93 (YLLL…TVCY), 98–120 (LILL…YLQY), 190–212 (YWLC…IIGW), 222–244 (LVPT…IYLY), 279–301 (HLLT…ILSS), 316–338 (LALQ…ILCY), 358–380 (LEII…ILSV), 390–412 (VIIL…TILI), 419–441 (IAVY…IWLL), 483–505 (LLDA…CLGV), 510–532 (LFIA…LQVV), 536–558 (ISYI…VYSI), 565–587 (LIMY…IHTI), 621–640 (IWLI…STLV), 683–705 (WVRF…YVQF), 718–740 (LTRI…QGIL), 745–767 (IISY…LTIL), 797–819 (PTWV…LVTV), 868–890 (ILLL…LLSL), 905–927 (LTVQ…YIVL), 966–988 (LYSY…SLLE), 1008–1030 (PDLL…ELLL), 1073–1095 (LTVV…QILF), 1105–1127 (LATI…LSYL), 1172–1194 (TYLL…IYII), 1219–1241 (VYFL…FFYH), 1248–1270 (GIFY…TLYY), 1296–1318 (IITF…AIIL), 1330–1352 (FAYN…IVSY), 1357–1379 (MIIF…YARI), 1418–1440 (LFAL…FDFT), 1444–1466 (VIVF…FVWL), 1478–1500 (ALIH…APIL), 1504–1526 (VYTL…ILAT), 1533–1555 (KAVA…FLAF), 1559–1581 (LIYL…YIVH), 1602–1624 (IAIY…GFFA), 1639–1661 (VATF…LYRI), 1719–1741 (LLHL…LVTG), 1773–1795 (VRNI…TAIN), and 1802–1824 (IIYL…HYFL).

This sequence belongs to the complex I subunit 5 family.

It is found in the hydrogenosome membrane. The enzyme catalyses a ubiquinone + NADH + 5 H(+)(in) = a ubiquinol + NAD(+) + 4 H(+)(out). The protein is NADH-ubiquinone oxidoreductase chain 5 (nad5) of Nyctotherus ovalis.